We begin with the raw amino-acid sequence, 421 residues long: Forkhead box protein J1 (421 aa).

Disordered regions lie at residues 1–32 (MAESWLRLCGAGPGEEAGPEGGMEEPDALDDS) and 77–110 (ADPACLGQPHTPGKPTSSCTSRSAPPGLQAPPPD). Over residues 11 to 21 (AGPGEEAGPEG) the composition is skewed to gly residues. Positions 90–99 (KPTSSCTSRS) are enriched in polar residues. The segment at residues 120 to 210 (VKPPYSYATL…YAERLLSGAF (91 aa)) is a DNA-binding region (fork-head).

The protein belongs to the FOXJ1 family. Predominantly expressed in tissues containing motile cilia.

The protein localises to the nucleus. In terms of biological role, transcription factor specifically required for the formation of motile cilia. Acts by activating transcription of genes that mediate assembly of motile cilia, such as CFAP157. Binds the DNA consensus sequences 5'-HWDTGTTTGTTTA-3' or 5'-KTTTGTTGTTKTW-3' (where H is not G, W is A or T, D is not C, and K is G or T). Activates the transcription of a variety of ciliary proteins in the developing brain and lung. In Mus musculus (Mouse), this protein is Forkhead box protein J1.